The primary structure comprises 309 residues: 4-hydroxy-3-methylbut-2-enyl diphosphate reductase (309 aa).

C12 serves as a coordination point for [4Fe-4S] cluster. (2E)-4-hydroxy-3-methylbut-2-enyl diphosphate is bound by residues H43 and H77. Dimethylallyl diphosphate is bound by residues H43 and H77. Positions 43 and 77 each coordinate isopentenyl diphosphate. Residue C99 participates in [4Fe-4S] cluster binding. Residue H127 coordinates (2E)-4-hydroxy-3-methylbut-2-enyl diphosphate. H127 contacts dimethylallyl diphosphate. H127 lines the isopentenyl diphosphate pocket. Residue E129 is the Proton donor of the active site. T167 lines the (2E)-4-hydroxy-3-methylbut-2-enyl diphosphate pocket. A [4Fe-4S] cluster-binding site is contributed by C197. Residues S225, S226, N227, and S269 each coordinate (2E)-4-hydroxy-3-methylbut-2-enyl diphosphate. 4 residues coordinate dimethylallyl diphosphate: S225, S226, N227, and S269. Isopentenyl diphosphate is bound by residues S225, S226, N227, and S269.

This sequence belongs to the IspH family. [4Fe-4S] cluster serves as cofactor.

It catalyses the reaction isopentenyl diphosphate + 2 oxidized [2Fe-2S]-[ferredoxin] + H2O = (2E)-4-hydroxy-3-methylbut-2-enyl diphosphate + 2 reduced [2Fe-2S]-[ferredoxin] + 2 H(+). The enzyme catalyses dimethylallyl diphosphate + 2 oxidized [2Fe-2S]-[ferredoxin] + H2O = (2E)-4-hydroxy-3-methylbut-2-enyl diphosphate + 2 reduced [2Fe-2S]-[ferredoxin] + 2 H(+). It functions in the pathway isoprenoid biosynthesis; dimethylallyl diphosphate biosynthesis; dimethylallyl diphosphate from (2E)-4-hydroxy-3-methylbutenyl diphosphate: step 1/1. Its pathway is isoprenoid biosynthesis; isopentenyl diphosphate biosynthesis via DXP pathway; isopentenyl diphosphate from 1-deoxy-D-xylulose 5-phosphate: step 6/6. Catalyzes the conversion of 1-hydroxy-2-methyl-2-(E)-butenyl 4-diphosphate (HMBPP) into a mixture of isopentenyl diphosphate (IPP) and dimethylallyl diphosphate (DMAPP). Acts in the terminal step of the DOXP/MEP pathway for isoprenoid precursor biosynthesis. The protein is 4-hydroxy-3-methylbut-2-enyl diphosphate reductase of Wolbachia sp. subsp. Brugia malayi (strain TRS).